We begin with the raw amino-acid sequence, 397 residues long: Phosphoglycerate kinase (397 aa).

Substrate-binding positions include 19 to 21, Arg35, 58 to 61, Arg117, and Arg150; these read DFN and HLGR. ATP is bound by residues Lys201, Glu323, and 349-352; that span reads GGDS.

This sequence belongs to the phosphoglycerate kinase family. As to quaternary structure, monomer.

It is found in the cytoplasm. The enzyme catalyses (2R)-3-phosphoglycerate + ATP = (2R)-3-phospho-glyceroyl phosphate + ADP. The protein operates within carbohydrate degradation; glycolysis; pyruvate from D-glyceraldehyde 3-phosphate: step 2/5. The chain is Phosphoglycerate kinase from Syntrophobacter fumaroxidans (strain DSM 10017 / MPOB).